A 29-amino-acid polypeptide reads, in one-letter code: Kalata-B11 (29 aa).

A cross-link (cyclopeptide (Gly-Asp)) is located at residues 1–29 (GLPVCGETCFGGTCNTPGCSCTDPICTRD). 3 disulfide bridges follow: C5–C19, C9–C21, and C14–C26.

This is a cyclic peptide.

Probably participates in a plant defense mechanism. The polypeptide is Kalata-B11 (Oldenlandia affinis).